The sequence spans 1163 residues: GTPase-activating protein (1163 aa).

C2 domains follow at residues Pro26–Phe148 and Thr261–Tyr419. One can recognise a Ras-GAP domain in the interval Glu520–Ile737. Residues Leu762–Leu860 form the PH domain. Residues Asn862–Lys898 form a Btk-type zinc finger. Zn(2+) contacts are provided by His870, Cys881, Cys882, and Cys892. 2 disordered regions span residues Leu1026 to Phe1051 and Pro1091 to Tyr1163. Over residues Pro1091–Gln1157 the composition is skewed to low complexity.

Interacts with sty. In terms of tissue distribution, in third instar larvae eye imaginal disk, expressed in cells posterior to the morphogenetic furrow, in all photoreceptor and cone cell precursors as well as in still uncommitted cells.

Its function is as follows. Inhibitory regulator of the Ras-cyclic AMP pathway. May function as a negative regulator of Ras85D/Ras1 in the sev signaling pathway. Acts cell autonomously in cone cell precursors as a negative regulator of R7 photoreceptor cell determination. This Drosophila melanogaster (Fruit fly) protein is GTPase-activating protein (RasGAP1).